The primary structure comprises 105 residues: Blood plasma apolipoprotein LAL1 (105 aa).

Positions 1-21 (MKLHVAALATLAVVCILAAGS) are cleaved as a signal peptide. Residues 22 to 29 (EAAPKAMS) constitute a propeptide that is removed on maturation.

Plasma.

Its subcellular location is the secreted. The chain is Blood plasma apolipoprotein LAL1 from Petromyzon marinus (Sea lamprey).